A 196-amino-acid chain; its full sequence is Imidazoleglycerol-phosphate dehydratase (196 aa).

Belongs to the imidazoleglycerol-phosphate dehydratase family.

It is found in the cytoplasm. It carries out the reaction D-erythro-1-(imidazol-4-yl)glycerol 3-phosphate = 3-(imidazol-4-yl)-2-oxopropyl phosphate + H2O. It participates in amino-acid biosynthesis; L-histidine biosynthesis; L-histidine from 5-phospho-alpha-D-ribose 1-diphosphate: step 6/9. The chain is Imidazoleglycerol-phosphate dehydratase from Clostridium botulinum (strain Langeland / NCTC 10281 / Type F).